The following is a 258-amino-acid chain: Retron Ec83 putative HNH endonuclease (258 aa).

Putative HNH endonuclease component of antiviral defense system retron Ec83, composed of a non-coding RNA (ncRNA), a reverse transcriptase (RT), a probable ATPase and this protein. Expression of retron Ec78 confers protection against bacteriophage T2, T4 and T6. At multiplicity of infection (MOI) of 0.02 cultures slow growth when infected with T4 but do not collapse, at MOI 2 cultures enter growth stasis. This chain is Retron Ec83 putative HNH endonuclease, found in Escherichia coli.